The primary structure comprises 1099 residues: Adenylate cyclase type 7 (1099 aa).

The Cytoplasmic portion of the chain corresponds to 1 to 33 (MPAKGRYFLNEGDEGPDQAALYEKYRLTSLHGP). The next 6 helical transmembrane spans lie at 34–54 (LLLL…SIAF), 63–83 (QVVL…YVLV), 95–117 (ALAL…DSLE), 122–142 (AWEQ…LLPL), 147–167 (AIVA…AVTR), and 178–198 (LGLQ…TGAF). Residues 199–595 (HKHQLQDASR…YRLVPIPRAR (397 aa)) are Cytoplasmic-facing. Residues D286, I287, and D330 each coordinate Mg(2+). ATP-binding positions include 286 to 291 (DIVGFT), 328 to 330 (LGD), and R374. A disordered region spans residues 456 to 476 (DPRSQQPPPPSHHLSKPKGDA). The mediates regulation of adenylate cyclase activity by C5 alpha-induced G- beta and gamma pathway stretch occupies residues 479-484 (KMRASV). Residues 493–501 (WGAARPFAH) are mediates regulation of adenylate cyclase activity by sphingosine 1-phosphate-induced G alpha 13 pathway. The tract at residues 504-543 (HRESVSSSETPISNGRRQKAIPLRRHRAPDRSASPKGRLE) is disordered. A compositionally biased stretch (polar residues) spans 508-518 (VSSSETPISNG). The modulates adenylate cyclase activity by modulating the binding of G(s)alpha to the high-affinity G(s)alpha binding site in 7C1a/7C2 stretch occupies residues 508–585 (VSSSETPISN…IFLEKGFERE (78 aa)). A compositionally biased stretch (basic residues) spans 519-531 (RRQKAIPLRRHRA). 3 helical membrane-spanning segments follow: residues 596 to 616 (YDFA…LLVM), 621 to 641 (TLGV…SFCF), and 670 to 689 (LVLV…INMP). N-linked (GlcNAc...) asparagine glycosylation occurs at N702. Transmembrane regions (helical) follow at residues 719–738 (LLPY…SVFL), 747–766 (MLLT…SPCW), and 813–833 (DLKI…ILLS). Topologically, residues 834–1099 (RQIDYYCRLD…TAKFQGLGLN (266 aa)) are cytoplasmic. Residues K950, 1029 to 1031 (DIW), 1036 to 1040 (NVASR), and K1076 contribute to the ATP site.

It belongs to the adenylyl cyclase class-4/guanylyl cyclase family. Mg(2+) is required as a cofactor. It depends on Mn(2+) as a cofactor. Post-translationally, phosphorylated by PRKCD. Most abundant in heart, spleen and lung.

It localises to the membrane. It carries out the reaction ATP = 3',5'-cyclic AMP + diphosphate. Activated by the G protein alpha subunit. Activated by the G protein beta and gamma subunit complex. Activated by GNA13 and GNA12. Ethanol and phorbol 12,13-dibutanoate significantly potentiate adenylate cyclase activity generated in response to the activation of the prostanoid receptor by the agonist prostaglandin E1(1-) in a PKC-dependent manner. Inhibited by lithium. Functionally, catalyzes the formation of cAMP in response to activation of G protein-coupled receptors. Functions in signaling cascades activated namely by thrombin and sphingosine 1-phosphate and mediates regulation of cAMP synthesis through synergistic action of the stimulatory G alpha protein with GNA13. Also, during inflammation, mediates zymosan-induced increase intracellular cAMP, leading to protein kinase A pathway activation in order to modulate innate immune responses through heterotrimeric G proteins G(12/13). Functions in signaling cascades activated namely by dopamine and C5 alpha chain and mediates regulation of cAMP synthesis through synergistic action of the stimulatory G protein with G beta:gamma complex. Functions, through cAMP response regulation, to keep inflammation under control during bacterial infection by sensing the presence of serum factors, such as the bioactive lysophospholipid (LPA) that regulate LPS-induced TNF-alpha production. However, it is also required for the optimal functions of B and T cells during adaptive immune responses by regulating cAMP synthesis in both B and T cells. This chain is Adenylate cyclase type 7, found in Mus musculus (Mouse).